The primary structure comprises 531 residues: 2,3-bisphosphoglycerate-independent phosphoglycerate mutase (531 aa).

Mn(2+) is bound by residues aspartate 13 and serine 63. The active-site Phosphoserine intermediate is serine 63. Substrate is bound by residues histidine 124, 154-155 (RD), arginine 187, arginine 193, 261-264 (RPDR), and lysine 342. Residues aspartate 420, histidine 424, aspartate 462, histidine 463, and histidine 480 each coordinate Mn(2+).

This sequence belongs to the BPG-independent phosphoglycerate mutase family. In terms of assembly, monomer. Mn(2+) serves as cofactor.

It carries out the reaction (2R)-2-phosphoglycerate = (2R)-3-phosphoglycerate. Its pathway is carbohydrate degradation; glycolysis; pyruvate from D-glyceraldehyde 3-phosphate: step 3/5. Its function is as follows. Catalyzes the interconversion of 2-phosphoglycerate and 3-phosphoglycerate. This Mycoplasma mycoides subsp. mycoides SC (strain CCUG 32753 / NCTC 10114 / PG1) protein is 2,3-bisphosphoglycerate-independent phosphoglycerate mutase.